Reading from the N-terminus, the 405-residue chain is DNA primase DnaG (405 aa).

A Toprim domain is found at 172–248 (DSIIVVEGRA…HIDYIARAPP (77 aa)). Mg(2+) contacts are provided by E178, D222, and D224. The tract at residues 279 to 302 (AAGEKTESQMSPQQPQLTQTQPTT) is disordered. Positions 290-302 (PQQPQLTQTQPTT) are enriched in low complexity.

The protein belongs to the archaeal DnaG primase family. As to quaternary structure, forms a ternary complex with MCM helicase and DNA. Component of the archaeal exosome complex. It depends on Mg(2+) as a cofactor.

It catalyses the reaction ssDNA + n NTP = ssDNA/pppN(pN)n-1 hybrid + (n-1) diphosphate.. RNA polymerase that catalyzes the synthesis of short RNA molecules used as primers for DNA polymerase during DNA replication. Also part of the exosome, which is a complex involved in RNA degradation. Acts as a poly(A)-binding protein that enhances the interaction between heteromeric, adenine-rich transcripts and the exosome. The sequence is that of DNA primase DnaG from Pyrobaculum islandicum (strain DSM 4184 / JCM 9189 / GEO3).